The following is a 71-amino-acid chain: ATP synthase subunit c (71 aa).

2 helical membrane passes run 5–25 (VLAAGIAVLSGIGAGVGIGIA) and 46–66 (FFILGAALCETTAIYGLVMAF).

The protein belongs to the ATPase C chain family. As to quaternary structure, F-type ATPases have 2 components, F(1) - the catalytic core - and F(0) - the membrane proton channel. F(1) has five subunits: alpha(3), beta(3), gamma(1), delta(1), epsilon(1). F(0) has three main subunits: a(1), b(2) and c(10-14). The alpha and beta chains form an alternating ring which encloses part of the gamma chain. F(1) is attached to F(0) by a central stalk formed by the gamma and epsilon chains, while a peripheral stalk is formed by the delta and b chains.

Its subcellular location is the cell membrane. Its function is as follows. F(1)F(0) ATP synthase produces ATP from ADP in the presence of a proton or sodium gradient. F-type ATPases consist of two structural domains, F(1) containing the extramembraneous catalytic core and F(0) containing the membrane proton channel, linked together by a central stalk and a peripheral stalk. During catalysis, ATP synthesis in the catalytic domain of F(1) is coupled via a rotary mechanism of the central stalk subunits to proton translocation. Key component of the F(0) channel; it plays a direct role in translocation across the membrane. A homomeric c-ring of between 10-14 subunits forms the central stalk rotor element with the F(1) delta and epsilon subunits. This is ATP synthase subunit c from Clostridium beijerinckii (strain ATCC 51743 / NCIMB 8052) (Clostridium acetobutylicum).